The following is an 80-amino-acid chain: Iota-conotoxin-like r11c (80 aa).

Positions 1 to 19 (MKLCLTFLLVLMILASVTG) are cleaved as a signal peptide. A propeptide spanning residues 20–35 (EKSSKHTLSRAARVKN) is cleaved from the precursor. A 4-hydroxyproline; partial mark is found at proline 38 and proline 47. Disulfide bonds link cysteine 41-cysteine 55, cysteine 48-cysteine 58, cysteine 54-cysteine 63, and cysteine 57-cysteine 72. Proline 65 is subject to 4-hydroxyproline. Residue leucine 78 is modified to D-leucine. Position 80 (arginine 80) is a propeptide, removed by a carboxypeptidase.

Post-translationally, the natural D-Leu form of the peptide is more potent than the synthetic L-Leu form. In terms of tissue distribution, expressed by the venom duct.

The protein localises to the secreted. Iota-conotoxins bind to voltage-gated sodium channels (Nav) and act as agonists by shifting the voltage-dependence of activation to more hyperpolarized levels. Causes circular motion, convulsions, copious urination, rigid paralysis and death upon intracranial injection into mice. Causes unbalanced swimming, swimming in diagonal and vertical motion and death, when injected intraperitoneally into goldfish. L-Leu and D-Leu forms are active on both nerve and muscle. The polypeptide is Iota-conotoxin-like r11c (Conus radiatus (Rayed cone)).